We begin with the raw amino-acid sequence, 628 residues long: Chaperone protein HtpG (628 aa).

Positions 1 to 337 (MSEKKYTFET…SADLPLNVSR (337 aa)) are a; substrate-binding. The segment at 338 to 554 (EILQHNKVID…DYGMSLHMQK (217 aa)) is b. Residues 555-628 (MMEEAGQSFM…FVKLVNKYIR (74 aa)) are c.

It belongs to the heat shock protein 90 family. Homodimer.

It is found in the cytoplasm. Molecular chaperone. Has ATPase activity. This is Chaperone protein HtpG from Francisella tularensis subsp. tularensis (strain WY96-3418).